The chain runs to 553 residues: PE cleavage protein A (553 aa).

The 92-residue stretch at methionine 1 to alanine 92 folds into the PE domain. Residue aspartate 293 is part of the active site.

It belongs to the mycobacterial PE family. PGRS subfamily. In terms of processing, undergoes auto-proteolytic processing.

The protein resides in the secreted. It is found in the cell surface. Functionally, aspartic protease that processes the lipase LipY and other PE_PGRS proteins. Can also cleave itself. Cleaves LipY both inside the PE domain, before amino acid 98, and after amino acids 136 and 149. Involved in virulence. This chain is PE cleavage protein A, found in Mycobacterium marinum (strain ATCC BAA-535 / M).